Here is a 30-residue protein sequence, read N- to C-terminus: Ribonuclease pancreatic (30 aa).

The span at 1–13 (KETAAAKFERQHM) shows a compositional bias: basic and acidic residues. The disordered stretch occupies residues 1 to 21 (KETAAAKFERQHMDPAPAAAX). Residues Lys-7 and Arg-10 each contribute to the substrate site. His-12 functions as the Proton acceptor in the catalytic mechanism.

Belongs to the pancreatic ribonuclease family. Monomer. Interacts with and forms tight 1:1 complexes with RNH1. Dimerization of two such complexes may occur. Interaction with RNH1 inhibits this protein. In terms of tissue distribution, pancreas.

Its subcellular location is the secreted. It carries out the reaction an [RNA] containing cytidine + H2O = an [RNA]-3'-cytidine-3'-phosphate + a 5'-hydroxy-ribonucleotide-3'-[RNA].. The catalysed reaction is an [RNA] containing uridine + H2O = an [RNA]-3'-uridine-3'-phosphate + a 5'-hydroxy-ribonucleotide-3'-[RNA].. Functionally, endonuclease that catalyzes the cleavage of RNA on the 3' side of pyrimidine nucleotides. Acts on single-stranded and double-stranded RNA. The chain is Ribonuclease pancreatic (RNASE1) from Odocoileus virginianus virginianus (Virginia white-tailed deer).